Consider the following 120-residue polypeptide: NAD(P)H-quinone oxidoreductase subunit 3, chloroplastic (120 aa).

3 helical membrane-spanning segments follow: residues 14-34 (LIISILIPILAFLISGILAPI), 64-84 (MFALVFVVFDVETVFLYPWAM), and 88-108 (VLGVSVFIEALIFVLILIVGS).

The protein belongs to the complex I subunit 3 family. In terms of assembly, NDH is composed of at least 16 different subunits, 5 of which are encoded in the nucleus.

The protein localises to the plastid. It localises to the chloroplast thylakoid membrane. The catalysed reaction is a plastoquinone + NADH + (n+1) H(+)(in) = a plastoquinol + NAD(+) + n H(+)(out). The enzyme catalyses a plastoquinone + NADPH + (n+1) H(+)(in) = a plastoquinol + NADP(+) + n H(+)(out). NDH shuttles electrons from NAD(P)H:plastoquinone, via FMN and iron-sulfur (Fe-S) centers, to quinones in the photosynthetic chain and possibly in a chloroplast respiratory chain. The immediate electron acceptor for the enzyme in this species is believed to be plastoquinone. Couples the redox reaction to proton translocation, and thus conserves the redox energy in a proton gradient. The protein is NAD(P)H-quinone oxidoreductase subunit 3, chloroplastic of Cicer arietinum (Chickpea).